The following is a 567-amino-acid chain: Malate synthase, glyoxysomal (567 aa).

The Proton acceptor role is filled by arginine 182. The Proton donor role is filled by aspartate 468. A Microbody targeting signal motif is present at residues serine 565–leucine 567.

It belongs to the malate synthase family.

Its subcellular location is the glyoxysome. The enzyme catalyses glyoxylate + acetyl-CoA + H2O = (S)-malate + CoA + H(+). It participates in carbohydrate metabolism; glyoxylate cycle; (S)-malate from isocitrate: step 2/2. This is Malate synthase, glyoxysomal from Gossypium hirsutum (Upland cotton).